We begin with the raw amino-acid sequence, 311 residues long: Triacylglycerol lipase (311 aa).

Positions 1 to 26 (MKKKSLLPLGLAIGLASLAASPLIQA) are cleaved as a signal peptide. In terms of domain architecture, AB hydrolase-1 spans 35–280 (PIVLAHGMLG…DNYRMNHLDE (246 aa)). Position 42 (Met42) interacts with substrate. The active-site Nucleophile is the Ser108. Position 109 (His109) interacts with substrate. The cysteines at positions 209 and 261 are disulfide-linked. Residue Asp235 participates in Ca(2+) binding. Active-site charge relay system residues include Asp255 and His277. Positions 279, 283, and 287 each coordinate Ca(2+).

Belongs to the AB hydrolase superfamily. Pseudomonas lipase family. As to quaternary structure, monomer. Ca(2+) is required as a cofactor.

It is found in the secreted. It catalyses the reaction a triacylglycerol + H2O = a diacylglycerol + a fatty acid + H(+). With respect to regulation, na(+) increases lipase activity. Inhibited by diethyl p-nitrophenyl phosphate and 3,4-dichloroisocoumarin (DCI). Catalyzes the hydrolysis of triacylglycerol. It also exhibits some esterase activity with p-nitrophenyl acetate and Tween 80 as substrates, however the lipase activity is approximately eight times the esterase activity. It shows a marked specificity for the 1,3-oleyl residues of triolein. The chain is Triacylglycerol lipase from Pseudomonas aeruginosa (strain ATCC 15692 / DSM 22644 / CIP 104116 / JCM 14847 / LMG 12228 / 1C / PRS 101 / PAO1).